A 121-amino-acid chain; its full sequence is ATP synthase epsilon chain (121 aa).

This sequence belongs to the ATPase epsilon chain family. In terms of assembly, F-type ATPases have 2 components, CF(1) - the catalytic core - and CF(0) - the membrane proton channel. CF(1) has five subunits: alpha(3), beta(3), gamma(1), delta(1), epsilon(1). CF(0) has three main subunits: a, b and c.

Its subcellular location is the cell membrane. Its function is as follows. Produces ATP from ADP in the presence of a proton gradient across the membrane. The sequence is that of ATP synthase epsilon chain from Mycobacterium sp. (strain JLS).